A 182-amino-acid polypeptide reads, in one-letter code: Ribosome maturation factor RimM (182 aa).

In terms of domain architecture, PRC barrel spans E102–F182.

The protein belongs to the RimM family. Binds ribosomal protein uS19.

The protein resides in the cytoplasm. Functionally, an accessory protein needed during the final step in the assembly of 30S ribosomal subunit, possibly for assembly of the head region. Essential for efficient processing of 16S rRNA. May be needed both before and after RbfA during the maturation of 16S rRNA. It has affinity for free ribosomal 30S subunits but not for 70S ribosomes. In Salmonella enteritidis PT4 (strain P125109), this protein is Ribosome maturation factor RimM.